An 841-amino-acid chain; its full sequence is SLIT and NTRK-like protein 6 (841 aa).

An N-terminal signal peptide occupies residues 1–26 (MKLWIHLFYSSLLACISLHSQTPVLS). Residues 27 to 67 (SRGSCDSLCNCEEKDGTMLINCEAKGIKMVSEISVPPSRPF) form the LRRNT 1 domain. Residues 27-608 (SRGSCDSLCN…RSLTDAVPLS (582 aa)) are Extracellular-facing. 5 LRR repeats span residues 89-110 (NAIS…AFNG), 113-134 (LLKQ…TFHG), 137-158 (NLEF…AFSK), 161-182 (RLKV…IFRF), and 184-205 (PLTH…GFLE). The LRRCT 1 domain occupies 218 to 269 (NKWACNCDLLQLKTWLENMPPQSIIGDVVCNSPPFFKGSILSRLKKESICPT). An LRRNT 2 domain is found at 320-361 (PSTQLPGPYCPIPCNCKVLSPSGLLIHCQERNIESLSDLRPP). LRR repeat units follow at residues 364 to 385 (NPRK…DLVE), 388 to 409 (TLEM…SFMN), 412 to 433 (RLQK…MFLG), 436 to 457 (NLEY…TFNP), 460 to 481 (KLKV…IFSG), and 483 to 504 (PLTK…NILD). Residues 517–568 (NPWDCSCDLVGLQQWIQKLSKNTVTDDILCTSPGHLDKKELKALNSEILCPG) enclose the LRRCT 2 domain. Residues 609–629 (VLILGLLIMFITIVFCAAGIV) traverse the membrane as a helical segment. At 630 to 841 (VLVLHRRRRY…DYLEVLEQQT (212 aa)) the chain is on the cytoplasmic side.

Belongs to the SLITRK family. In adult brain, highly expressed in putamen with no expression in cerebral cortex. Expressed in adult and fetal lung and fetal liver. Also expressed at high levels in some brain tumors including medulloblastomas and primitive neuroectodermal tumors.

The protein localises to the cell membrane. Functionally, regulator of neurite outgrowth required for normal hearing and vision. In Homo sapiens (Human), this protein is SLIT and NTRK-like protein 6 (SLITRK6).